Here is a 298-residue protein sequence, read N- to C-terminus: MAKKEEHVRKPDWLKIKLNTNENYTGLKKMMRENNLNTVCEEAKCPNIHECWAVRRTATFMILGSVCTRACRFCAVKTGLPTELDLQEPERVADSVALMNLKHAVITAVARDDQKDGGAGVFAETVRAIRRKSPFTTIEVLPSDMGGNYDNLKTLMDTRPDILNHNIETVRRLTPRVRARATYDRSLEFLRRAKEMQPDIPTKSSIMIGLGETKEEIIEVMDDLLANNVDIMAIGQYLQPSKKHLKVQKYYHPDEFAELKEIAMAKGFSHCEAGPLVRSSYHADEQVNEASKKRQAQA.

Residues C40, C45, C51, C67, C71, C74, and S280 each contribute to the [4Fe-4S] cluster site. The region spanning 53-269 (AVRRTATFMI…KEIAMAKGFS (217 aa)) is the Radical SAM core domain.

It belongs to the radical SAM superfamily. Lipoyl synthase family. Requires [4Fe-4S] cluster as cofactor.

The protein localises to the cytoplasm. The enzyme catalyses [[Fe-S] cluster scaffold protein carrying a second [4Fe-4S](2+) cluster] + N(6)-octanoyl-L-lysyl-[protein] + 2 oxidized [2Fe-2S]-[ferredoxin] + 2 S-adenosyl-L-methionine + 4 H(+) = [[Fe-S] cluster scaffold protein] + N(6)-[(R)-dihydrolipoyl]-L-lysyl-[protein] + 4 Fe(3+) + 2 hydrogen sulfide + 2 5'-deoxyadenosine + 2 L-methionine + 2 reduced [2Fe-2S]-[ferredoxin]. It participates in protein modification; protein lipoylation via endogenous pathway; protein N(6)-(lipoyl)lysine from octanoyl-[acyl-carrier-protein]. In terms of biological role, catalyzes the radical-mediated insertion of two sulfur atoms into the C-6 and C-8 positions of the octanoyl moiety bound to the lipoyl domains of lipoate-dependent enzymes, thereby converting the octanoylated domains into lipoylated derivatives. The chain is Lipoyl synthase from Bacillus pumilus (strain SAFR-032).